Reading from the N-terminus, the 94-residue chain is MIKPLGDRVVIEIVETEEKTASGIVLPDTAKEKPQEGKVVAVGKGRVLDNGQRVAPEVEVGDRIIFSKYAGTEVKYDGKEYLILRESDILAVIG.

The protein belongs to the GroES chaperonin family. As to quaternary structure, heptamer of 7 subunits arranged in a ring. Interacts with the chaperonin GroEL.

It localises to the cytoplasm. Its function is as follows. Together with the chaperonin GroEL, plays an essential role in assisting protein folding. The GroEL-GroES system forms a nano-cage that allows encapsulation of the non-native substrate proteins and provides a physical environment optimized to promote and accelerate protein folding. GroES binds to the apical surface of the GroEL ring, thereby capping the opening of the GroEL channel. This is Co-chaperonin GroES from Parageobacillus thermoglucosidasius (Geobacillus thermoglucosidasius).